Here is a 660-residue protein sequence, read N- to C-terminus: Septation initiation protein sid4 (660 aa).

Disordered regions lie at residues 79–243, 368–396, and 459–503; these read TKKE…QQHF, STTV…PDTK, and RHTS…PAKN. Composition is skewed to polar residues over residues 125-138, 156-176, and 222-243; these read SFNS…STPY, SNSP…QSPK, and RPNQ…QQHF. Over residues 384 to 396 the composition is skewed to basic and acidic residues; sequence STKDFKEQKPDTK. Composition is skewed to polar residues over residues 459 to 480 and 488 to 497; these read RHTS…ITTK and KENTMLNDGS.

In terms of assembly, homodimer. Interacts with cdc11, sad1, plo1 and dma1.

The protein resides in the cytoplasm. It localises to the cytoskeleton. The protein localises to the microtubule organizing center. It is found in the spindle pole body. In terms of biological role, required for activation of the spg1 GTPase signaling cascade which leads to the initiation of septation and the subsequent termination of mitosis. May act as a scaffold at the spindle pole body to which other components of the spg1 signaling cascade attach. This is Septation initiation protein sid4 (sid4) from Schizosaccharomyces pombe (strain 972 / ATCC 24843) (Fission yeast).